The chain runs to 266 residues: uncharacterized protein (266 aa).

Residues 12–28 (ILAAGLAIGCAGGYYAY) form a helical membrane-spanning segment. The 101-residue stretch at 40-140 (EIYAPFTVNK…RGPFKTTKLD (101 aa)) folds into the FAD-binding FR-type domain.

Belongs to the flavoprotein pyridine nucleotide cytochrome reductase family. FAD serves as cofactor.

The protein resides in the mitochondrion outer membrane. This is an uncharacterized protein from Schizosaccharomyces pombe (strain 972 / ATCC 24843) (Fission yeast).